The chain runs to 192 residues: Elongation factor P (192 aa).

Belongs to the elongation factor P family.

The protein localises to the cytoplasm. The protein operates within protein biosynthesis; polypeptide chain elongation. Involved in peptide bond synthesis. Stimulates efficient translation and peptide-bond synthesis on native or reconstituted 70S ribosomes in vitro. Probably functions indirectly by altering the affinity of the ribosome for aminoacyl-tRNA, thus increasing their reactivity as acceptors for peptidyl transferase. In Borrelia hermsii (strain HS1 / DAH), this protein is Elongation factor P.